Reading from the N-terminus, the 211-residue chain is Proline-rich 33 kDa extensin-related protein (211 aa).

The first 14 residues, 1 to 14, serve as a signal peptide directing secretion; it reads AILGVAIFAAPSLA. 2 stretches are compositionally biased toward pro residues: residues 25–59 and 82–93; these read PPVY…PVHK and HKPPVYKPPVQK. Residues 25 to 211 are disordered; it reads PPVYTPPVHK…RHPPVENTGN (187 aa). Basic residues-rich tracts occupy residues 101–111 and 127–139; these read PVHKPPIHKPP and PIHK…RPPV. Composition is skewed to basic and acidic residues over residues 142–159 and 167–177; these read PPTE…EHKP and KTEKPVPEHKP. Residues 179–198 show a composition bias toward pro residues; sequence HLPPIVVRPPPTHKPNPPYG.

The protein belongs to the plant proline-rich protein superfamily. ENOD12 family.

Its subcellular location is the secreted. It is found in the cell wall. The chain is Proline-rich 33 kDa extensin-related protein from Daucus carota (Wild carrot).